The chain runs to 697 residues: tRNA 5-methylaminomethyl-2-thiouridine biosynthesis bifunctional protein MnmC (697 aa).

The tRNA (mnm(5)s(2)U34)-methyltransferase stretch occupies residues 1-269; it reads MNKTPLLSVS…LRQQLQQQFA (269 aa). The interval 287-697 is FAD-dependent cmnm(5)s(2)U34 oxidoreductase; sequence IGGGIASASL…RKLLKGKALM (411 aa).

In the N-terminal section; belongs to the methyltransferase superfamily. tRNA (mnm(5)s(2)U34)-methyltransferase family. It in the C-terminal section; belongs to the DAO family. FAD serves as cofactor.

It localises to the cytoplasm. The catalysed reaction is 5-aminomethyl-2-thiouridine(34) in tRNA + S-adenosyl-L-methionine = 5-methylaminomethyl-2-thiouridine(34) in tRNA + S-adenosyl-L-homocysteine + H(+). In terms of biological role, catalyzes the last two steps in the biosynthesis of 5-methylaminomethyl-2-thiouridine (mnm(5)s(2)U) at the wobble position (U34) in tRNA. Catalyzes the FAD-dependent demodification of cmnm(5)s(2)U34 to nm(5)s(2)U34, followed by the transfer of a methyl group from S-adenosyl-L-methionine to nm(5)s(2)U34, to form mnm(5)s(2)U34. The sequence is that of tRNA 5-methylaminomethyl-2-thiouridine biosynthesis bifunctional protein MnmC from Shewanella frigidimarina (strain NCIMB 400).